A 534-amino-acid polypeptide reads, in one-letter code: Prolyl 4-hydroxylase subunit alpha-1 (534 aa).

A signal peptide spans 1–17; the sequence is MIWYILIIGILLPQSLA. Asn-113 is a glycosylation site (N-linked (GlcNAc...) asparagine). The TPR repeat unit spans residues 205-238; that stretch reads VSVLDYLSYAVYQQGDLDKALLLTKKLLELDPEH. A glycan (N-linked (GlcNAc...) asparagine) is linked at Asn-259. One can recognise a Fe2OG dioxygenase domain in the interval 411–519; it reads TAEELQVANY…KWVSNKWLHE (109 aa). Positions 429, 431, and 500 each coordinate Fe cation. Lys-510 is a binding site for 2-oxoglutarate.

It belongs to the P4HA family. Heterotetramer of two alpha-1 chains and two beta chains (P4HB)(the beta chain is the multi-functional PDI), where P4HB plays the role of a structural subunit; this tetramer catalyzes the formation of 4-hydroxyproline in collagen. The cofactor is Fe(2+). It depends on L-ascorbate as a cofactor. As to expression, expressed in the heart, liver, skeletal muscle, kidney, placenta, lung and pancreas.

The protein resides in the endoplasmic reticulum lumen. It carries out the reaction L-prolyl-[collagen] + 2-oxoglutarate + O2 = trans-4-hydroxy-L-prolyl-[collagen] + succinate + CO2. Its activity is regulated as follows. Inhibited by poly(L-proline). Its function is as follows. Catalyzes the post-translational formation of 4-hydroxyproline in -Xaa-Pro-Gly- sequences in collagens and other proteins. The protein is Prolyl 4-hydroxylase subunit alpha-1 (P4HA1) of Homo sapiens (Human).